We begin with the raw amino-acid sequence, 92 residues long: Elongation factor 1-beta (92 aa).

The protein belongs to the EF-1-beta/EF-1-delta family.

Functionally, promotes the exchange of GDP for GTP in EF-1-alpha/GDP, thus allowing the regeneration of EF-1-alpha/GTP that could then be used to form the ternary complex EF-1-alpha/GTP/AAtRNA. This Pyrobaculum neutrophilum (strain DSM 2338 / JCM 9278 / NBRC 100436 / V24Sta) (Thermoproteus neutrophilus) protein is Elongation factor 1-beta.